Reading from the N-terminus, the 144-residue chain is Large ribosomal subunit protein uL15 (144 aa).

The disordered stretch occupies residues 1–54 (MRLNTLSPAAGAKHAPKRVGRGMGSGLGKTAGRGHKGQKSRSGGGVRPGFEGGQ). Gly residues-rich tracts occupy residues 21–31 (RGMGSGLGKTA) and 42–52 (SGGGVRPGFEG).

This sequence belongs to the universal ribosomal protein uL15 family. As to quaternary structure, part of the 50S ribosomal subunit.

Binds to the 23S rRNA. The sequence is that of Large ribosomal subunit protein uL15 from Shewanella oneidensis (strain ATCC 700550 / JCM 31522 / CIP 106686 / LMG 19005 / NCIMB 14063 / MR-1).